The sequence spans 588 residues: Adenine deaminase (588 aa).

Belongs to the metallo-dependent hydrolases superfamily. Adenine deaminase family. As to quaternary structure, homodimer. Requires Mn(2+) as cofactor.

It catalyses the reaction adenine + H2O + H(+) = hypoxanthine + NH4(+). The sequence is that of Adenine deaminase from Escherichia coli O45:K1 (strain S88 / ExPEC).